The primary structure comprises 196 residues: Glycerol-3-phosphate acyltransferase (196 aa).

Transmembrane regions (helical) follow at residues 4 to 24 (FYIMLLAAYLIGAIPTGVVLT), 53 to 73 (LGVLTLIGDALKGAVPVLIAI), 78 to 98 (LGDAQVGAVAAAAFIGHCYPV), 114 to 134 (IFLVLSPLAVLGAFAVFALLV), and 140 to 160 (VSLGSICAAAAIPILVYFTEG).

Belongs to the PlsY family. In terms of assembly, probably interacts with PlsX.

Its subcellular location is the cell inner membrane. The catalysed reaction is an acyl phosphate + sn-glycerol 3-phosphate = a 1-acyl-sn-glycero-3-phosphate + phosphate. It participates in lipid metabolism; phospholipid metabolism. Its function is as follows. Catalyzes the transfer of an acyl group from acyl-phosphate (acyl-PO(4)) to glycerol-3-phosphate (G3P) to form lysophosphatidic acid (LPA). This enzyme utilizes acyl-phosphate as fatty acyl donor, but not acyl-CoA or acyl-ACP. The polypeptide is Glycerol-3-phosphate acyltransferase (Syntrophotalea carbinolica (strain DSM 2380 / NBRC 103641 / GraBd1) (Pelobacter carbinolicus)).